A 347-amino-acid chain; its full sequence is Phosphoribosylformylglycinamidine cyclo-ligase (347 aa).

The protein belongs to the AIR synthase family.

The protein resides in the cytoplasm. It catalyses the reaction 2-formamido-N(1)-(5-O-phospho-beta-D-ribosyl)acetamidine + ATP = 5-amino-1-(5-phospho-beta-D-ribosyl)imidazole + ADP + phosphate + H(+). Its pathway is purine metabolism; IMP biosynthesis via de novo pathway; 5-amino-1-(5-phospho-D-ribosyl)imidazole from N(2)-formyl-N(1)-(5-phospho-D-ribosyl)glycinamide: step 2/2. This Prochlorococcus marinus (strain AS9601) protein is Phosphoribosylformylglycinamidine cyclo-ligase.